A 208-amino-acid polypeptide reads, in one-letter code: Holliday junction resolvase RecU (208 aa).

Positions 87, 89, 102, and 121 each coordinate Mg(2+).

Belongs to the RecU family. Mg(2+) is required as a cofactor.

The protein localises to the cytoplasm. The catalysed reaction is Endonucleolytic cleavage at a junction such as a reciprocal single-stranded crossover between two homologous DNA duplexes (Holliday junction).. In terms of biological role, endonuclease that resolves Holliday junction intermediates in genetic recombination. Cleaves mobile four-strand junctions by introducing symmetrical nicks in paired strands. Promotes annealing of linear ssDNA with homologous dsDNA. Required for DNA repair, homologous recombination and chromosome segregation. The polypeptide is Holliday junction resolvase RecU (Staphylococcus aureus (strain MRSA252)).